A 196-amino-acid chain; its full sequence is Protein GrpE (196 aa).

Residues 1-39 (MSSKEQKTPEGQAPEEIIMDQHEEIEAVEPEASAEQVDP) form a disordered region.

Belongs to the GrpE family. In terms of assembly, homodimer.

Its subcellular location is the cytoplasm. Functionally, participates actively in the response to hyperosmotic and heat shock by preventing the aggregation of stress-denatured proteins, in association with DnaK and GrpE. It is the nucleotide exchange factor for DnaK and may function as a thermosensor. Unfolded proteins bind initially to DnaJ; upon interaction with the DnaJ-bound protein, DnaK hydrolyzes its bound ATP, resulting in the formation of a stable complex. GrpE releases ADP from DnaK; ATP binding to DnaK triggers the release of the substrate protein, thus completing the reaction cycle. Several rounds of ATP-dependent interactions between DnaJ, DnaK and GrpE are required for fully efficient folding. This chain is Protein GrpE, found in Escherichia coli O139:H28 (strain E24377A / ETEC).